The following is a 418-amino-acid chain: Queuine tRNA-ribosyltransferase accessory subunit 2 (418 aa).

Zn(2+) is bound by residues Cys-325, Cys-327, Cys-330, and His-356.

It belongs to the queuine tRNA-ribosyltransferase family. QTRT2 subfamily. As to quaternary structure, heterodimer of a catalytic subunit and an accessory subunit. It depends on Zn(2+) as a cofactor.

Its subcellular location is the cytoplasm. Non-catalytic subunit of the queuine tRNA-ribosyltransferase (TGT) that catalyzes the base-exchange of a guanine (G) residue with queuine (Q) at position 34 (anticodon wobble position) in tRNAs with GU(N) anticodons (tRNA-Asp, -Asn, -His and -Tyr), resulting in the hypermodified nucleoside queuosine (7-(((4,5-cis-dihydroxy-2-cyclopenten-1-yl)amino)methyl)-7-deazaguanosine). The chain is Queuine tRNA-ribosyltransferase accessory subunit 2 from Drosophila erecta (Fruit fly).